The following is a 430-amino-acid chain: Cyclin-A2 (430 aa).

At methionine 1 the chain carries N-acetylmethionine. Disordered stretches follow at residues 1-80 (MLGS…PIND) and 106-129 (EEIQ…FNSA). Phosphoserine is present on serine 5. The span at 107–120 (EIQKRPTESKKSES) shows a compositional bias: basic and acidic residues.

This sequence belongs to the cyclin family. Cyclin AB subfamily. As to quaternary structure, interacts with the CDK1 and CDK2 protein kinases to form serine/threonine kinase holoenzyme complexes. Interacts with CDK1 (hyperphosphorylated form in G1 and underphosphorylated forms in S and G2). Interacts with CDK2; the interaction increases from G1 to G2. Interacts (associated with CDK2 but not with CDK1) with SCAPER; regulates the activity of CCNA2/CDK2 by transiently maintaining CCNA2 in the cytoplasm. Forms a ternary complex with CDK2 and CDKN1B; CDKN1B inhibits the kinase activity of CDK2 through conformational rearrangements. Interacts with INCA1. Post-translationally, polyubiquitinated via 'Lys-11'-linked ubiquitin by the anaphase-promoting complex (APC/C), leading to its degradation by the proteasome. Deubiquitinated and stabilized by USP37 enables entry into S phase. Ubiquitinated during the G1 phase by the SCF(FBXO31) complex, leading to its proteasomal degradation.

Its subcellular location is the nucleus. It is found in the cytoplasm. Cyclin which controls both the G1/S and the G2/M transition phases of the cell cycle. Functions through the formation of specific serine/threonine kinase holoenzyme complexes with the cyclin-dependent protein kinases CDK1 and CDK2. The cyclin subunit confers the substrate specificity of these complexes and differentially interacts with and activates CDK1 and CDK2 throughout the cell cycle. The sequence is that of Cyclin-A2 from Bos taurus (Bovine).